Reading from the N-terminus, the 357-residue chain is Protein RecA (357 aa).

Residue 78 to 85 (GPESSGKT) participates in ATP binding.

It belongs to the RecA family.

The protein localises to the cytoplasm. Can catalyze the hydrolysis of ATP in the presence of single-stranded DNA, the ATP-dependent uptake of single-stranded DNA by duplex DNA, and the ATP-dependent hybridization of homologous single-stranded DNAs. It interacts with LexA causing its activation and leading to its autocatalytic cleavage. The polypeptide is Protein RecA (Cereibacter sphaeroides (strain ATCC 17029 / ATH 2.4.9) (Rhodobacter sphaeroides)).